The following is a 307-amino-acid chain: tRNA dimethylallyltransferase (307 aa).

An ATP-binding site is contributed by 6-13 (GATATGKT). Residue 8 to 13 (TATGKT) participates in substrate binding. An interaction with substrate tRNA region spans residues 31-34 (DSMM).

It belongs to the IPP transferase family. As to quaternary structure, monomer. The cofactor is Mg(2+).

It carries out the reaction adenosine(37) in tRNA + dimethylallyl diphosphate = N(6)-dimethylallyladenosine(37) in tRNA + diphosphate. Catalyzes the transfer of a dimethylallyl group onto the adenine at position 37 in tRNAs that read codons beginning with uridine, leading to the formation of N6-(dimethylallyl)adenosine (i(6)A). The chain is tRNA dimethylallyltransferase from Sulfurihydrogenibium sp. (strain YO3AOP1).